A 422-amino-acid polypeptide reads, in one-letter code: Mannose-1-phosphate guanylyltransferase regulatory subunit alpha-B (422 aa).

Positions 2–253 are substrate-binding domain; that stretch reads LKAIILIGGP…QHFWSQIKSA (252 aa). Glutamate 85 and glutamine 249 together coordinate GDP-alpha-D-mannose. The tract at residues 275–422 is hexapeptide repeat domain; that stretch reads LATNQGGTPK…NRSFKNQIIL (148 aa). A C-loop region spans residues 358–386; that stretch reads TPSDPNPNDPYAKIDSETLFRDGGLTPSI.

This sequence belongs to the transferase hexapeptide repeat family. In terms of assembly, component of the GMPPA-GMPPB mannose-1-phosphate guanylyltransferase complex composed of 4 GMPPA subunits and 8 GMPPB subunits; the complex is organized into three layers, a central layer made up of 2 GMPPA dimers sandwiched between two layers each made up of 2 GMPPB dimers.

It participates in nucleotide-sugar biosynthesis; GDP-alpha-D-mannose biosynthesis; GDP-alpha-D-mannose from alpha-D-mannose 1-phosphate (GTP route): step 1/1. Regulatory subunit of the GMPPA-GMPPB mannose-1-phosphate guanylyltransferase complex; reduces the catalytic activity of GMPPB when part of the complex. Mediates allosteric feedback inhibition of GMPPB catalytic activity upon binding GDP-alpha-D-mannose. Together with GMPPB regulates GDP-alpha-D-mannose levels. One of two paralogs (gmppaa and gmppab) that may have redundant functions. The chain is Mannose-1-phosphate guanylyltransferase regulatory subunit alpha-B (gmppab) from Danio rerio (Zebrafish).